Here is a 430-residue protein sequence, read N- to C-terminus: Serine--tRNA ligase (430 aa).

236-238 (TAE) contributes to the L-serine binding site. 267 to 269 (RRE) is an ATP binding site. An L-serine-binding site is contributed by E290. 354 to 357 (EISS) contributes to the ATP binding site. S390 lines the L-serine pocket.

The protein belongs to the class-II aminoacyl-tRNA synthetase family. Type-1 seryl-tRNA synthetase subfamily. As to quaternary structure, homodimer. The tRNA molecule binds across the dimer.

It is found in the cytoplasm. The enzyme catalyses tRNA(Ser) + L-serine + ATP = L-seryl-tRNA(Ser) + AMP + diphosphate + H(+). It catalyses the reaction tRNA(Sec) + L-serine + ATP = L-seryl-tRNA(Sec) + AMP + diphosphate + H(+). It functions in the pathway aminoacyl-tRNA biosynthesis; selenocysteinyl-tRNA(Sec) biosynthesis; L-seryl-tRNA(Sec) from L-serine and tRNA(Sec): step 1/1. Catalyzes the attachment of serine to tRNA(Ser). Is also able to aminoacylate tRNA(Sec) with serine, to form the misacylated tRNA L-seryl-tRNA(Sec), which will be further converted into selenocysteinyl-tRNA(Sec). In Gloeothece citriformis (strain PCC 7424) (Cyanothece sp. (strain PCC 7424)), this protein is Serine--tRNA ligase.